Here is a 208-residue protein sequence, read N- to C-terminus: Tektin bundle-interacting protein 1 (208 aa).

Microtubule inner protein component of sperm flagellar doublet microtubules. In terms of tissue distribution, expressed in trachea multiciliated cells.

Its subcellular location is the cytoplasm. The protein localises to the cytoskeleton. The protein resides in the cilium axoneme. It localises to the flagellum axoneme. In terms of biological role, microtubule inner protein (MIP) part of the dynein-decorated doublet microtubules (DMTs) in cilia axoneme, which is required for motile cilia beating. Located at the center of the tektin bundle where may function to recruit tektins or stabilize the bundle. This Bos taurus (Bovine) protein is Tektin bundle-interacting protein 1 (TEKTIP1).